A 146-amino-acid polypeptide reads, in one-letter code: Small ribosomal subunit protein bS6 (146 aa).

Residues 100-146 are disordered; that stretch reads QSAMMRKRDDDDRGDRPDRGDRGRGPRPDRPPRRPRDDAAASDEGGF. Residues 105–138 are compositionally biased toward basic and acidic residues; that stretch reads RKRDDDDRGDRPDRGDRGRGPRPDRPPRRPRDDA.

Belongs to the bacterial ribosomal protein bS6 family.

Binds together with bS18 to 16S ribosomal RNA. This chain is Small ribosomal subunit protein bS6, found in Methylocella silvestris (strain DSM 15510 / CIP 108128 / LMG 27833 / NCIMB 13906 / BL2).